The primary structure comprises 244 residues: 14-3-3 protein homolog 1 (244 aa).

The protein belongs to the 14-3-3 family.

This Echinococcus granulosus (Hydatid tapeworm) protein is 14-3-3 protein homolog 1.